We begin with the raw amino-acid sequence, 87 residues long: Toxin ICK-42 (87 aa).

Positions 1 to 19 are cleaved as a signal peptide; that stretch reads MKPIVYMLLFCAFTVVILG. Disulfide bonds link cysteine 40–cysteine 54, cysteine 40–cysteine 77, cysteine 53–cysteine 66, and cysteine 80–cysteine 87.

Belongs to the neurotoxin 27 (Jztx-72) family. ICK-41 subfamily. In terms of tissue distribution, expressed by the venom gland.

It localises to the secreted. Functionally, probable neurotoxin with ion channel impairing activity. The chain is Toxin ICK-42 from Trittame loki (Brush-footed trapdoor spider).